Consider the following 288-residue polypeptide: Glycine--tRNA ligase alpha subunit (288 aa).

The protein belongs to the class-II aminoacyl-tRNA synthetase family. In terms of assembly, tetramer of two alpha and two beta subunits.

The protein resides in the cytoplasm. It carries out the reaction tRNA(Gly) + glycine + ATP = glycyl-tRNA(Gly) + AMP + diphosphate. The polypeptide is Glycine--tRNA ligase alpha subunit (Rickettsia peacockii (strain Rustic)).